A 506-amino-acid polypeptide reads, in one-letter code: Lysine--tRNA ligase (506 aa).

Positions 416 and 423 each coordinate Mg(2+).

Belongs to the class-II aminoacyl-tRNA synthetase family. Homodimer. Mg(2+) serves as cofactor.

It is found in the cytoplasm. The catalysed reaction is tRNA(Lys) + L-lysine + ATP = L-lysyl-tRNA(Lys) + AMP + diphosphate. In Pelotomaculum thermopropionicum (strain DSM 13744 / JCM 10971 / SI), this protein is Lysine--tRNA ligase.